Consider the following 148-residue polypeptide: Large ribosomal subunit protein uL13 (148 aa).

The interval 128 to 148 is disordered; the sequence is PEHPHQAQNPQPFEINAKVEK.

The protein belongs to the universal ribosomal protein uL13 family. As to quaternary structure, part of the 50S ribosomal subunit.

Functionally, this protein is one of the early assembly proteins of the 50S ribosomal subunit, although it is not seen to bind rRNA by itself. It is important during the early stages of 50S assembly. This Saccharopolyspora erythraea (strain ATCC 11635 / DSM 40517 / JCM 4748 / NBRC 13426 / NCIMB 8594 / NRRL 2338) protein is Large ribosomal subunit protein uL13.